The chain runs to 266 residues: Glutamate racemase (266 aa).

Substrate contacts are provided by residues 9–10 (DS) and 41–42 (YG). The active-site Proton donor/acceptor is Cys-72. 73-74 (NT) serves as a coordination point for substrate. Residue Cys-184 is the Proton donor/acceptor of the active site. 185–186 (TH) is a binding site for substrate.

This sequence belongs to the aspartate/glutamate racemases family.

It carries out the reaction L-glutamate = D-glutamate. It functions in the pathway cell wall biogenesis; peptidoglycan biosynthesis. In terms of biological role, provides the (R)-glutamate required for cell wall biosynthesis. The polypeptide is Glutamate racemase (Staphylococcus aureus (strain Mu3 / ATCC 700698)).